Consider the following 540-residue polypeptide: Chaperonin GroEL (540 aa).

ATP is bound by residues 29–32 (TLGP), 86–90 (DGTTT), glycine 413, 476–478 (NAA), and aspartate 492.

The protein belongs to the chaperonin (HSP60) family. Forms a cylinder of 14 subunits composed of two heptameric rings stacked back-to-back. Interacts with the co-chaperonin GroES.

Its subcellular location is the cytoplasm. The enzyme catalyses ATP + H2O + a folded polypeptide = ADP + phosphate + an unfolded polypeptide.. Functionally, together with its co-chaperonin GroES, plays an essential role in assisting protein folding. The GroEL-GroES system forms a nano-cage that allows encapsulation of the non-native substrate proteins and provides a physical environment optimized to promote and accelerate protein folding. In Streptococcus gordonii (strain Challis / ATCC 35105 / BCRC 15272 / CH1 / DL1 / V288), this protein is Chaperonin GroEL.